Here is a 274-residue protein sequence, read N- to C-terminus: Diaminopimelate epimerase (274 aa).

Residues Asn11, Gln44, and Asn64 each coordinate substrate. Cys73 serves as the catalytic Proton donor. Residues 74 to 75 (GN), Asn157, Asn190, and 208 to 209 (ER) each bind substrate. Cys217 (proton acceptor) is an active-site residue. A substrate-binding site is contributed by 218–219 (GS).

This sequence belongs to the diaminopimelate epimerase family. In terms of assembly, homodimer.

It is found in the cytoplasm. It catalyses the reaction (2S,6S)-2,6-diaminopimelate = meso-2,6-diaminopimelate. Its pathway is amino-acid biosynthesis; L-lysine biosynthesis via DAP pathway; DL-2,6-diaminopimelate from LL-2,6-diaminopimelate: step 1/1. Catalyzes the stereoinversion of LL-2,6-diaminopimelate (L,L-DAP) to meso-diaminopimelate (meso-DAP), a precursor of L-lysine and an essential component of the bacterial peptidoglycan. In Actinobacillus succinogenes (strain ATCC 55618 / DSM 22257 / CCUG 43843 / 130Z), this protein is Diaminopimelate epimerase.